A 270-amino-acid polypeptide reads, in one-letter code: Phosphatidylglycerol--prolipoprotein diacylglyceryl transferase (270 aa).

Transmembrane regions (helical) follow at residues 19–39, 53–73, 92–112, and 117–137; these read FPVYWYGIIIGTGVLLGLWLA, FVDLVLFAVPIAIICARAYYV, QGGLAIHGGLIGAVMTGIIYA, and ISFWKLADIAAPSILLGQAIG. Position 138 (Arg138) interacts with a 1,2-diacyl-sn-glycero-3-phospho-(1'-sn-glycerol). 3 helical membrane-spanning segments follow: residues 178–198, 206–226, and 236–256; these read HPTFLYESLWSFAGVILLLLL, GELFFTYLIWYSIGRFFVEEL, and LRIAQVMSIGLIVISIIFIIV.

This sequence belongs to the Lgt family.

It localises to the cell membrane. It carries out the reaction L-cysteinyl-[prolipoprotein] + a 1,2-diacyl-sn-glycero-3-phospho-(1'-sn-glycerol) = an S-1,2-diacyl-sn-glyceryl-L-cysteinyl-[prolipoprotein] + sn-glycerol 1-phosphate + H(+). The protein operates within protein modification; lipoprotein biosynthesis (diacylglyceryl transfer). In terms of biological role, catalyzes the transfer of the diacylglyceryl group from phosphatidylglycerol to the sulfhydryl group of the N-terminal cysteine of a prolipoprotein, the first step in the formation of mature lipoproteins. This chain is Phosphatidylglycerol--prolipoprotein diacylglyceryl transferase, found in Bacillus cytotoxicus (strain DSM 22905 / CIP 110041 / 391-98 / NVH 391-98).